Reading from the N-terminus, the 851-residue chain is Protein FAM13B (851 aa).

Residues 23 to 212 (IPLDELQQGG…GLLENYYEFF (190 aa)) enclose the Rho-GAP domain. A compositionally biased stretch (basic and acidic residues) spans 556–565 (IKDAKHKNSD). Residues 556–611 (IKDAKHKNSDGEFAPQTRPRSNTLPKSFGSSLDHEDGESEGEPRVIQKEKTPSKEA) are disordered. Polar residues predominate over residues 573–585 (RPRSNTLPKSFGS). Residues 596–611 (GEPRVIQKEKTPSKEA) are compositionally biased toward basic and acidic residues.

This sequence belongs to the FAM13 family.

This is Protein FAM13B (Fam13b) from Mus musculus (Mouse).